The chain runs to 49 residues: Light-harvesting protein B-875 beta chain (49 aa).

The Cytoplasmic portion of the chain corresponds to Ala-2–Gly-27. The a bacteriochlorophyll site is built by His-21 and His-39. A helical; Signal-anchor for type II membrane protein membrane pass occupies residues Leu-28–Trp-45. Over Arg-46 to Phe-49 the chain is Periplasmic.

It belongs to the antenna complex beta subunit family. As to quaternary structure, the core complex is formed by different alpha and beta chains, binding bacteriochlorophyll molecules, and arranged most probably in tetrameric structures disposed around the reaction center. The non-pigmented gamma chains may constitute additional components.

The protein localises to the cell inner membrane. Its function is as follows. Antenna complexes are light-harvesting systems, which transfer the excitation energy to the reaction centers. In Cereibacter sphaeroides (strain ATCC 17023 / DSM 158 / JCM 6121 / CCUG 31486 / LMG 2827 / NBRC 12203 / NCIMB 8253 / ATH 2.4.1.) (Rhodobacter sphaeroides), this protein is Light-harvesting protein B-875 beta chain (pufB).